The following is a 431-amino-acid chain: Histidinol dehydrogenase (431 aa).

Positions 127, 189, and 212 each coordinate NAD(+). Substrate contacts are provided by Ser237, Gln259, and His262. Residues Gln259 and His262 each contribute to the Zn(2+) site. Active-site proton acceptor residues include Glu326 and His327. Residues His327, Asp360, Glu414, and His419 each contribute to the substrate site. Asp360 contributes to the Zn(2+) binding site. Residue His419 coordinates Zn(2+).

This sequence belongs to the histidinol dehydrogenase family. Zn(2+) is required as a cofactor.

It carries out the reaction L-histidinol + 2 NAD(+) + H2O = L-histidine + 2 NADH + 3 H(+). Its pathway is amino-acid biosynthesis; L-histidine biosynthesis; L-histidine from 5-phospho-alpha-D-ribose 1-diphosphate: step 9/9. In terms of biological role, catalyzes the sequential NAD-dependent oxidations of L-histidinol to L-histidinaldehyde and then to L-histidine. The chain is Histidinol dehydrogenase from Xanthomonas euvesicatoria pv. vesicatoria (strain 85-10) (Xanthomonas campestris pv. vesicatoria).